Reading from the N-terminus, the 283-residue chain is Protoheme IX farnesyltransferase (283 aa).

Helical transmembrane passes span 13-33 (ISSV…PTGL), 35-55 (GGTL…VGTL), 90-110 (ILLV…LTAV), 156-176 (LGAG…PHFL), 208-228 (MIGF…TEAA), 230-250 (WIYG…TIVF), and 262-282 (VLKA…VDWF).

The protein belongs to the UbiA prenyltransferase family. Protoheme IX farnesyltransferase subfamily.

Its subcellular location is the cell inner membrane. It carries out the reaction heme b + (2E,6E)-farnesyl diphosphate + H2O = Fe(II)-heme o + diphosphate. It participates in porphyrin-containing compound metabolism; heme O biosynthesis; heme O from protoheme: step 1/1. Functionally, converts heme B (protoheme IX) to heme O by substitution of the vinyl group on carbon 2 of heme B porphyrin ring with a hydroxyethyl farnesyl side group. The chain is Protoheme IX farnesyltransferase from Salinibacter ruber (strain DSM 13855 / M31).